Consider the following 213-residue polypeptide: Peroxiredoxin-5, mitochondrial (213 aa).

A mitochondrion-targeting transit peptide spans 1–51 (MVQLRFCVLGSIAGSVLRASATWTCVAGRAGRKGAGWECGGARSFSSAAVT). The Thioredoxin domain occupies 55–213 (IKVGDTIPSV…SLAPNILSQL (159 aa)). Lys-74 carries the post-translational modification N6-acetyllysine. An N6-acetyllysine; alternate modification is found at Lys-82. Lys-82 is modified (N6-succinyllysine; alternate). Cys-99 acts as the Cysteine sulfenic acid (-SOH) intermediate in catalysis. Cys-99 carries S-palmitoyl cysteine lipidation. Cys-99 and Cys-203 are disulfide-bonded. Residue Lys-115 is modified to N6-succinyllysine. Residues Ser-170 and Ser-181 each carry the phosphoserine modification. The short motif at 211-213 (SQL) is the Microbody targeting signal element.

The protein belongs to the peroxiredoxin family. Prx5 subfamily. Monomer. Post-translationally, S-palmitoylated. Palmitoylation occurs on the active site, inhibiting its reactivity; therefore PRDX5 palmitoylation status determines its antioxidant capacity. In terms of processing, S-palmitoylated. Depalmitoylated by ABHD10.

The protein resides in the mitochondrion. It localises to the cytoplasm. Its subcellular location is the peroxisome matrix. The enzyme catalyses a hydroperoxide + [thioredoxin]-dithiol = an alcohol + [thioredoxin]-disulfide + H2O. Functionally, thiol-specific peroxidase that catalyzes the reduction of hydrogen peroxide and organic hydroperoxides to water and alcohols, respectively. Plays a role in cell protection against oxidative stress by detoxifying peroxides and as sensor of hydrogen peroxide-mediated signaling events. The sequence is that of Peroxiredoxin-5, mitochondrial from Rattus norvegicus (Rat).